Reading from the N-terminus, the 394-residue chain is Ornithine aminotransferase 1 (394 aa).

Lys252 carries the post-translational modification N6-(pyridoxal phosphate)lysine.

It belongs to the class-III pyridoxal-phosphate-dependent aminotransferase family. OAT subfamily. The cofactor is pyridoxal 5'-phosphate.

It is found in the cytoplasm. The catalysed reaction is a 2-oxocarboxylate + L-ornithine = L-glutamate 5-semialdehyde + an L-alpha-amino acid. It functions in the pathway amino-acid biosynthesis; L-proline biosynthesis; L-glutamate 5-semialdehyde from L-ornithine: step 1/1. Its function is as follows. Catalyzes the interconversion of ornithine to glutamate semialdehyde. In Staphylococcus aureus (strain Mu50 / ATCC 700699), this protein is Ornithine aminotransferase 1.